The following is a 411-amino-acid chain: Metal-binding regulatory protein cuf1 (411 aa).

A DNA-binding region (copper-fist) is located at residues 1–40 (MVVINNVKMACMKCIRGHRSSTCKHNDRELFPIRPKGRPI). Zn(2+) contacts are provided by cysteine 11, cysteine 14, cysteine 23, and histidine 25. Residues 63-92 (SRKKGSKCSTSSTTDLDSSSASNSSCSIPS) form a disordered region. Over residues 69-92 (KCSTSSTTDLDSSSASNSSCSIPS) the composition is skewed to low complexity.

It is found in the cytoplasm. It localises to the nucleus. In terms of biological role, copper-sensing transcription factor that regulates iron uptake genes. Under copper starvation conditions activates the transcription of the copper transport genes, ctr4, ctr5 and ctr6. This Schizosaccharomyces pombe (strain 972 / ATCC 24843) (Fission yeast) protein is Metal-binding regulatory protein cuf1 (cuf1).